Here is a 460-residue protein sequence, read N- to C-terminus: ATP synthase subunit beta (460 aa).

150-157 lines the ATP pocket; that stretch reads GGAGVGKT.

The protein belongs to the ATPase alpha/beta chains family. In terms of assembly, F-type ATPases have 2 components, CF(1) - the catalytic core - and CF(0) - the membrane proton channel. CF(1) has five subunits: alpha(3), beta(3), gamma(1), delta(1), epsilon(1). CF(0) has three main subunits: a(1), b(2) and c(9-12). The alpha and beta chains form an alternating ring which encloses part of the gamma chain. CF(1) is attached to CF(0) by a central stalk formed by the gamma and epsilon chains, while a peripheral stalk is formed by the delta and b chains.

It is found in the cell inner membrane. It carries out the reaction ATP + H2O + 4 H(+)(in) = ADP + phosphate + 5 H(+)(out). Its function is as follows. Produces ATP from ADP in the presence of a proton gradient across the membrane. The catalytic sites are hosted primarily by the beta subunits. The sequence is that of ATP synthase subunit beta from Citrobacter koseri (strain ATCC BAA-895 / CDC 4225-83 / SGSC4696).